The primary structure comprises 396 residues: GTPase Obg (396 aa).

The Obg domain maps to 1 to 159 (MKFVDEATIY…RNIRLELKVL (159 aa)). Positions 160–333 (ADVGLLGLPN…LCQDIMTWIE (174 aa)) constitute an OBG-type G domain. GTP contacts are provided by residues 166-173 (GLPNAGKS), 191-195 (FTTLV), 213-216 (DIPG), 283-286 (NKTD), and 314-316 (SAL). Residues Ser173 and Thr193 each coordinate Mg(2+). 2 disordered regions span residues 337–356 (EEER…REQM) and 373–396 (LARK…FYAP). Over residues 347-356 (EADRLNREQM) the composition is skewed to basic and acidic residues. Residues 381–396 (SDDDDDDEDVEVFYAP) show a composition bias toward acidic residues.

It belongs to the TRAFAC class OBG-HflX-like GTPase superfamily. OBG GTPase family. As to quaternary structure, monomer. The cofactor is Mg(2+).

The protein localises to the cytoplasm. An essential GTPase which binds GTP, GDP and possibly (p)ppGpp with moderate affinity, with high nucleotide exchange rates and a fairly low GTP hydrolysis rate. Plays a role in control of the cell cycle, stress response, ribosome biogenesis and in those bacteria that undergo differentiation, in morphogenesis control. This Hahella chejuensis (strain KCTC 2396) protein is GTPase Obg.